Here is a 254-residue protein sequence, read N- to C-terminus: Large ribosomal subunit protein uL15m (254 aa).

A mitochondrion-targeting transit peptide spans 1-78 (MFNILSRVCR…GSGQRRGRRI (78 aa)). The interval 44–104 (NYQSKKRVGR…KVGHSTGHLK (61 aa)) is disordered. Residues 64–79 (GRGHKGSGQRRGRRIK) show a composition bias toward basic residues.

Belongs to the universal ribosomal protein uL15 family. As to quaternary structure, component of the mitochondrial large ribosomal subunit (mt-LSU). Mature yeast 74S mitochondrial ribosomes consist of a small (37S) and a large (54S) subunit. The 37S small subunit contains a 15S ribosomal RNA (15S mt-rRNA) and at least 32 different proteins. The 54S large subunit contains a 21S rRNA (21S mt-rRNA) and at least 45 different proteins.

It localises to the mitochondrion. Component of the mitochondrial ribosome (mitoribosome), a dedicated translation machinery responsible for the synthesis of mitochondrial genome-encoded proteins, including at least some of the essential transmembrane subunits of the mitochondrial respiratory chain. The mitoribosomes are attached to the mitochondrial inner membrane and translation products are cotranslationally integrated into the membrane. This Schizosaccharomyces pombe (strain 972 / ATCC 24843) (Fission yeast) protein is Large ribosomal subunit protein uL15m (mrpl10).